A 577-amino-acid chain; its full sequence is Arginine--tRNA ligase (577 aa).

A 'HIGH' region motif is present at residues 122-132 (PNVAKEMHVGH).

Belongs to the class-I aminoacyl-tRNA synthetase family. Monomer.

The protein localises to the cytoplasm. It carries out the reaction tRNA(Arg) + L-arginine + ATP = L-arginyl-tRNA(Arg) + AMP + diphosphate. The protein is Arginine--tRNA ligase of Escherichia coli (strain ATCC 8739 / DSM 1576 / NBRC 3972 / NCIMB 8545 / WDCM 00012 / Crooks).